Consider the following 352-residue polypeptide: Putative histone-lysine N-methyltransferase ASHH4 (352 aa).

One can recognise an AWS domain in the interval 60-109; that stretch reads DHGIFCSCSLDPGSSTLCGSDCNCGILLSSCSSSCKCSSECTNKPFQQRH. One can recognise an SET domain in the interval 111-228; sequence KKMKLVQTEK…KGEQLTYDYQ (118 aa). In terms of domain architecture, Post-SET spans 234–250; that stretch reads ADQDCYCGAVCCRKKLG.

It belongs to the class V-like SAM-binding methyltransferase superfamily. Histone-lysine methyltransferase family. SET2 subfamily.

Its subcellular location is the nucleus. The protein localises to the chromosome. It is found in the centromere. The catalysed reaction is L-lysyl-[histone] + S-adenosyl-L-methionine = N(6)-methyl-L-lysyl-[histone] + S-adenosyl-L-homocysteine + H(+). In terms of biological role, histone methyltransferase. In Arabidopsis thaliana (Mouse-ear cress), this protein is Putative histone-lysine N-methyltransferase ASHH4 (ASHH4).